The primary structure comprises 156 residues: Small ribosomal subunit protein uS7 (156 aa).

The protein belongs to the universal ribosomal protein uS7 family. In terms of assembly, part of the 30S ribosomal subunit. Contacts proteins S9 and S11.

One of the primary rRNA binding proteins, it binds directly to 16S rRNA where it nucleates assembly of the head domain of the 30S subunit. Is located at the subunit interface close to the decoding center, probably blocks exit of the E-site tRNA. The sequence is that of Small ribosomal subunit protein uS7 from Deinococcus deserti (strain DSM 17065 / CIP 109153 / LMG 22923 / VCD115).